The primary structure comprises 753 residues: Glycerophosphodiester phosphodiesterase GDPDL6 (753 aa).

Residues 1-17 form the signal peptide; it reads MLRFFILFSLFLHSSVA. GP-PDE domains follow at residues 41–339 and 355–654; these read PAVV…SQSI and ALVI…TRYL. 4 N-linked (GlcNAc...) asparagine glycosylation sites follow: Asn304, Asn516, Asn603, and Asn715. The disordered stretch occupies residues 707-729; it reads PPVAKLASNGTEGGPPQTPPRSG. The chain crosses the membrane as a helical span at residues 731–751; that stretch reads VAIAANLSLSLLAMMALGLLY.

Belongs to the glycerophosphoryl diester phosphodiesterase family. Expressed in flowers and siliques.

It is found in the membrane. It carries out the reaction a sn-glycero-3-phosphodiester + H2O = an alcohol + sn-glycerol 3-phosphate + H(+). In Arabidopsis thaliana (Mouse-ear cress), this protein is Glycerophosphodiester phosphodiesterase GDPDL6.